We begin with the raw amino-acid sequence, 182 residues long: Rhodanese-like domain-containing protein 15, chloroplastic (182 aa).

The transit peptide at 1–65 (METTAFNTTS…TTSRGNVAAE (65 aa)) directs the protein to the chloroplast. Positions 82 to 182 (AQAGYRYLDV…WTENELPVEE (101 aa)) constitute a Rhodanese domain. Cys142 functions as the Cysteine persulfide intermediate in the catalytic mechanism.

It localises to the plastid. The protein resides in the chloroplast. The protein localises to the thylakoid. The polypeptide is Rhodanese-like domain-containing protein 15, chloroplastic (STR15) (Arabidopsis thaliana (Mouse-ear cress)).